A 151-amino-acid chain; its full sequence is Large ribosomal subunit protein uL13 (151 aa).

Positions 126–151 (YPGSNHPHEAQKPEKLTIQTIPGGER) are disordered. Over residues 131–140 (HPHEAQKPEK) the composition is skewed to basic and acidic residues.

It belongs to the universal ribosomal protein uL13 family. Part of the 50S ribosomal subunit.

Its function is as follows. This protein is one of the early assembly proteins of the 50S ribosomal subunit, although it is not seen to bind rRNA by itself. It is important during the early stages of 50S assembly. This is Large ribosomal subunit protein uL13 from Trichodesmium erythraeum (strain IMS101).